The sequence spans 307 residues: Elongation factor Ts (307 aa).

Positions 80-83 are involved in Mg(2+) ion dislocation from EF-Tu; sequence TDFV.

It belongs to the EF-Ts family.

Its subcellular location is the cytoplasm. Associates with the EF-Tu.GDP complex and induces the exchange of GDP to GTP. It remains bound to the aminoacyl-tRNA.EF-Tu.GTP complex up to the GTP hydrolysis stage on the ribosome. The chain is Elongation factor Ts from Clostridium botulinum (strain 657 / Type Ba4).